The chain runs to 535 residues: MKYVIVSGGVISGVGKGIVSSSIGALLKSRGHVVTHFKIDPYLNYNAGRMHPYEHGEVYVLDDGHECDMDFGNYERFNGIKLSGANSIPGGRLLHDIVKCEREGSFLGKTLQINPHIIDEVIRRIRAVADTPVESFGGGQAAVPDVVVVELGGTVGEYESSIYTEALAKFQYVVGKANCAFVSVDYIVELETGEQKTKGIQMGCRNFRRFGLNYDIVICRGRREPNMETRRKISTSCWVKEENVLGLPNLESVYLAPMFLEKHGIVEALNRILGLDDKGMDRRMLDIFSMVGRRHRDGVRIGIVGKYAPEFDSYTSLVNALKFSGAHIGVNVEIVWINSESYSVCDFERCDGVVIPGGFGARGISGKIEAIRHARENGVPLLGICLGYQLSVIEMCRNILGMSDAFSEEFQPSGKNLVVRFISDENGVVDKRLRVGGYGVELRDGLVKKLYGGVETVRERHRHRFEVAQEKVRGLLQHGVRFVGFSSGGKKINVFEVESHPFFVGVQFHPEFNARPDRPHPLITGLVSASYERSK.

The region spanning 300–535 is the Glutamine amidotransferase type-1 domain; the sequence is RIGIVGKYAP…LVSASYERSK (236 aa). Active-site for GATase activity residues include Cys-385, His-509, and Glu-511.

Belongs to the CTP synthase family.

It catalyses the reaction UTP + L-glutamine + ATP + H2O = CTP + L-glutamate + ADP + phosphate + 2 H(+). Its pathway is pyrimidine metabolism; CTP biosynthesis via de novo pathway; CTP from UDP: step 2/2. Its function is as follows. Catalyzes the ATP-dependent amination of UTP to CTP with either L-glutamine or ammonia as the source of nitrogen. In Encephalitozoon cuniculi (strain GB-M1) (Microsporidian parasite), this protein is CTP synthase.